The following is a 271-amino-acid chain: Formamidopyrimidine-DNA glycosylase (271 aa).

The active-site Schiff-base intermediate with DNA is proline 2. The active-site Proton donor is glutamate 3. The active-site Proton donor; for beta-elimination activity is lysine 56. Positions 89, 107, and 151 each coordinate DNA. The FPG-type zinc-finger motif lies at 236-270 (MVYARQGQPCRVCATPIKSLRQGQRSTFYCPHCQK). Arginine 260 acts as the Proton donor; for delta-elimination activity in catalysis.

It belongs to the FPG family. Monomer. The cofactor is Zn(2+).

The enzyme catalyses Hydrolysis of DNA containing ring-opened 7-methylguanine residues, releasing 2,6-diamino-4-hydroxy-5-(N-methyl)formamidopyrimidine.. It catalyses the reaction 2'-deoxyribonucleotide-(2'-deoxyribose 5'-phosphate)-2'-deoxyribonucleotide-DNA = a 3'-end 2'-deoxyribonucleotide-(2,3-dehydro-2,3-deoxyribose 5'-phosphate)-DNA + a 5'-end 5'-phospho-2'-deoxyribonucleoside-DNA + H(+). Functionally, involved in base excision repair of DNA damaged by oxidation or by mutagenic agents. Acts as a DNA glycosylase that recognizes and removes damaged bases. Has a preference for oxidized purines, such as 7,8-dihydro-8-oxoguanine (8-oxoG). Has AP (apurinic/apyrimidinic) lyase activity and introduces nicks in the DNA strand. Cleaves the DNA backbone by beta-delta elimination to generate a single-strand break at the site of the removed base with both 3'- and 5'-phosphates. In Albidiferax ferrireducens (strain ATCC BAA-621 / DSM 15236 / T118) (Rhodoferax ferrireducens), this protein is Formamidopyrimidine-DNA glycosylase.